The sequence spans 418 residues: Ras association domain-containing protein 5 (418 aa).

The disordered stretch occupies residues 1–118 (MAMASPAIGQ…QPQDPRVPAE (118 aa)). At alanine 2 the chain carries N-acetylthreonine. Low complexity predominate over residues 77-89 (SRPARPLRPGLQQ). Residues 122-170 (GHCFAELVLPGGPGWCDLCGREVLRQALRCTNCKFTCHPECRSLIQLDC) form a Phorbol-ester/DAG-type zinc finger. Phosphoserine is present on residues serine 182 and serine 279. In terms of domain architecture, Ras-associating spans 274–364 (TDKRTSFYLP…LSFVLKENET (91 aa)). Phosphothreonine is present on threonine 352. The SARAH domain maps to 366–413 (EVEWDAFSIPELQNFLTILEKEEQDKIQQVQKKYDKFRQKLEEALRES).

In terms of assembly, interacts directly with activated HRAS; a RASSF5-STK4/MST1 complex probably associates with activated HRAS. Interacts with KRAS. Probably interacts with Ras-like GTPases RRAS, MRAS, RAP1B, RAP2A and RALA. Interacts with RRAS2. Can self-associate. Interacts with RSSF1 isoform A. The RSSF1 isoform A-RSSF5 heterodimer probably mediates the association of RSSF1 with HRAS. Isoform 2 interacts with activated RAP1A and ITGAL/LFA-1. Binds STK4/MST1, inhibiting STK4/MST1 autoactivation. Widely expressed. Frequently down-regulated in lung tumor cell lines and primary lung tumors.

It is found in the cytoplasm. The protein resides in the cytoskeleton. Its function is as follows. Potential tumor suppressor. Seems to be involved in lymphocyte adhesion by linking RAP1A activation upon T-cell receptor or chemokine stimulation to integrin activation. Isoform 2 stimulates lymphocyte polarization and the patch-like distribution of ITGAL/LFA-1, resulting in an enhanced adhesion to ICAM1. Together with RAP1A may participate in regulation of microtubule growth. The association of isoform 2 with activated RAP1A is required for directional movement of endothelial cells during wound healing. May be involved in regulation of Ras apoptotic function. The RASSF5-STK4/MST1 complex may mediate HRAS and KRAS induced apoptosis. The protein is Ras association domain-containing protein 5 (RASSF5) of Homo sapiens (Human).